The sequence spans 185 residues: Protein LPA2 (185 aa).

A chloroplast-targeting transit peptide spans 1–46; sequence MALQIHSPCSFSTRPYHLFFTTRNPRFAIKCQNSQIESDTTEDPSR. The interval 35-105 is disordered; the sequence is QIESDTTEDP…VFMSEEGAAK (71 aa). A compositionally biased stretch (low complexity) spans 47–75; the sequence is SKNSSSSGVGFGSPASSSSPAKKLSAATS. Residues 83–92 show a composition bias toward basic and acidic residues; the sequence is KREVNRRAPV. 2 helical membrane-spanning segments follow: residues 115–135 and 152–172; these read AFLL…IILA and VYPV…AYGV.

The protein resides in the plastid. It localises to the chloroplast membrane. This chain is Protein LPA2, found in Arabidopsis thaliana (Mouse-ear cress).